A 553-amino-acid polypeptide reads, in one-letter code: Transmembrane protein DDB_G0292058 (553 aa).

The first 26 residues, 1 to 26, serve as a signal peptide directing secretion; it reads MIKINKILSLLIILLIINCNYQFVKA. Transmembrane regions (helical) follow at residues 80–100 and 137–157; these read ILLS…GIIF and VFIL…VFIT. Asparagine 162, asparagine 171, asparagine 178, and asparagine 195 each carry an N-linked (GlcNAc...) asparagine glycan. 2 consecutive transmembrane segments (helical) span residues 243–263 and 274–294; these read IIIV…VSAL and SIAL…HYPI. N-linked (GlcNAc...) asparagine glycans are attached at residues asparagine 315, asparagine 332, asparagine 351, asparagine 396, asparagine 405, and asparagine 462. Residues 515-535 traverse the membrane as a helical segment; that stretch reads LLIAPTAVFAILLTGLGITGI.

It is found in the membrane. This chain is Transmembrane protein DDB_G0292058, found in Dictyostelium discoideum (Social amoeba).